The primary structure comprises 1024 residues: Probable alpha-mannosidase At5g13980 (1024 aa).

Residues 1-21 form the signal peptide; the sequence is MDLAKFLCWIVLLLGISLVES. Residue Asn27 is glycosylated (N-linked (GlcNAc...) asparagine). Zn(2+)-binding residues include His46 and Asp48. Asn63 carries an N-linked (GlcNAc...) asparagine glycan. Residue Asp168 coordinates Zn(2+). Asn278 carries an N-linked (GlcNAc...) asparagine glycan. His410 lines the Zn(2+) pocket. A disulfide bridge connects residues Cys461 and Cys469. Asn465, Asn475, Asn637, Asn658, Asn733, and Asn823 each carry an N-linked (GlcNAc...) asparagine glycan. Cys827 and Cys832 form a disulfide bridge.

Belongs to the glycosyl hydrolase 38 family. As to quaternary structure, homodimer. Requires Zn(2+) as cofactor.

The enzyme catalyses Hydrolysis of terminal, non-reducing alpha-D-mannose residues in alpha-D-mannosides.. In terms of biological role, liberates mannose from p-nitrophenyl-alpha-D-mannoside in vitro. This chain is Probable alpha-mannosidase At5g13980, found in Arabidopsis thaliana (Mouse-ear cress).